Consider the following 441-residue polypeptide: MKQFSILIAGGGSTFTPGIILMLLDNLDKFPIRQIKMFDNDAERQAKIGEACAILLKEKAPQIKFSYSTNPEEAFTDIDFVMAHIRVGKYPMRELDEKIPLRHGVVGQETCGPGGIAYGMRSIGGVIGLIDYMEKYSPNAWMLNYSNPAAIVAEATRRLRPNSKVLNICDMPIGIEVRMAEILGLESRKDMDIMYYGLNHFGWWKSVRDKQGNDLMPKLREHVSQYGYVVPKGDNQHTEASWNDTFAKAKDVLALDPTTLPNTYLKYYLFPDYVVEHSNKEYTRANEVMDGREKFVFGECEKVVKNQSSEGCALHIDEHASYIVDLARAIAFNTKEKMLLIVENNGAIVNFDSTAMVEIPCIVGSNGPEPLVVGRIPQFQKGMMEQQVTVEKLTVEAWIEGSYQKLWQAITMSKTVPSAKVAKDILDDLIEANKEYWPVLK.

4–70 (FSILIAGGGS…PQIKFSYSTN (67 aa)) lines the NAD(+) pocket. Substrate is bound by residues R93 and N147. C169 is a Mn(2+) binding site. D170 serves as the catalytic Proton donor. H200 serves as a coordination point for Mn(2+). The Proton acceptor role is filled by Y264. R284 is a substrate binding site.

This sequence belongs to the glycosyl hydrolase 4 family. Homotetramer. It depends on NAD(+) as a cofactor. Requires Mn(2+) as cofactor. Fe(2+) is required as a cofactor. The cofactor is Co(2+). Ni(2+) serves as cofactor.

The catalysed reaction is alpha-maltose 6'-phosphate + H2O = D-glucose 6-phosphate + D-glucose. Its pathway is glycan degradation; maltose degradation. Functionally, hydrolyzes a wide variety of 6-phospho-alpha-D-glucosides including maltose-6'P, trehalose-6P and the 6'-phosphorylated derivatives of the five linkage-isomeric alpha-D-glucosyl-D-fructoses: trehalulose-6'P, turanose-6'P, maltulose-6'P, leucrose-6'P, and palatinose-6'P. However, sucrose-6P is not a substrate for MalH, and this enzyme also fails to hydrolyze beta-O-linked phosphorylated disaccharides such as cellobiose-6'P and gentobiose-6'P. The sequence is that of Maltose-6'-phosphate glucosidase (malH) from Fusobacterium mortiferum.